Here is a 966-residue protein sequence, read N- to C-terminus: Protein mes-1 (966 aa).

The signal sequence occupies residues 1–19; that stretch reads MKIHHFLTLLCTFLPLTTT. The Extracellular portion of the chain corresponds to 20 to 470; the sequence is ALTNSTPLSL…QASDIPTSVE (451 aa). N-linked (GlcNAc...) asparagine glycosylation is found at asparagine 62, asparagine 126, asparagine 183, asparagine 214, asparagine 251, and asparagine 372. A helical transmembrane segment spans residues 471-491; it reads LMAVVLATSAIFALIALFLLY. Over 492–966 the chain is Cytoplasmic; that stretch reads RKRKRDKKAR…FKSVNVAATV (475 aa). A Protein kinase domain is found at 656 to 966; sequence HNFNERIEKQ…FKSVNVAATV (311 aa). Residues 662 to 670 and lysine 685 each bind ATP; that span reads IEKQAYWLM.

Belongs to the protein kinase superfamily.

It localises to the cell membrane. Its function is as follows. During early embryogenesis, controls asymmetric cell division and the asymmetric localization of P granules of germline precursor P2 and its descendant P3. Probably upstream of tyrosine kinase src-1, plays a role in endoderm development by controlling spindle orientation during EMS blastomere cell division. Controls EMS spindle orientation probably by promoting lin-5 and gpr-1/2 enrichment at, and let-99 exclusion from the junction between P2 and EMS cells. This chain is Protein mes-1, found in Caenorhabditis elegans.